Here is a 240-residue protein sequence, read N- to C-terminus: UDP-2,3-diacylglucosamine hydrolase (240 aa).

5 residues coordinate Mn(2+): D8, H10, D41, N79, and H114. Residue 79–80 coordinates substrate; it reads NR. The substrate site is built by D122, S160, N164, K167, and H195. The Mn(2+) site is built by H195 and H197.

This sequence belongs to the LpxH family. It depends on Mn(2+) as a cofactor.

Its subcellular location is the cell inner membrane. It carries out the reaction UDP-2-N,3-O-bis[(3R)-3-hydroxytetradecanoyl]-alpha-D-glucosamine + H2O = 2-N,3-O-bis[(3R)-3-hydroxytetradecanoyl]-alpha-D-glucosaminyl 1-phosphate + UMP + 2 H(+). It participates in glycolipid biosynthesis; lipid IV(A) biosynthesis; lipid IV(A) from (3R)-3-hydroxytetradecanoyl-[acyl-carrier-protein] and UDP-N-acetyl-alpha-D-glucosamine: step 4/6. Functionally, hydrolyzes the pyrophosphate bond of UDP-2,3-diacylglucosamine to yield 2,3-diacylglucosamine 1-phosphate (lipid X) and UMP by catalyzing the attack of water at the alpha-P atom. Involved in the biosynthesis of lipid A, a phosphorylated glycolipid that anchors the lipopolysaccharide to the outer membrane of the cell. The chain is UDP-2,3-diacylglucosamine hydrolase from Shigella sonnei (strain Ss046).